The following is a 307-amino-acid chain: UDP-3-O-acyl-N-acetylglucosamine deacetylase (307 aa).

Zn(2+)-binding residues include H78, H237, and D241. H264 functions as the Proton donor in the catalytic mechanism.

It belongs to the LpxC family. The cofactor is Zn(2+).

The enzyme catalyses a UDP-3-O-[(3R)-3-hydroxyacyl]-N-acetyl-alpha-D-glucosamine + H2O = a UDP-3-O-[(3R)-3-hydroxyacyl]-alpha-D-glucosamine + acetate. It participates in glycolipid biosynthesis; lipid IV(A) biosynthesis; lipid IV(A) from (3R)-3-hydroxytetradecanoyl-[acyl-carrier-protein] and UDP-N-acetyl-alpha-D-glucosamine: step 2/6. Functionally, catalyzes the hydrolysis of UDP-3-O-myristoyl-N-acetylglucosamine to form UDP-3-O-myristoylglucosamine and acetate, the committed step in lipid A biosynthesis. This chain is UDP-3-O-acyl-N-acetylglucosamine deacetylase, found in Azoarcus sp. (strain BH72).